Consider the following 236-residue polypeptide: 2,3,4,5-tetrahydropyridine-2,6-dicarboxylate N-acetyltransferase (236 aa).

It belongs to the transferase hexapeptide repeat family. DapH subfamily.

The enzyme catalyses (S)-2,3,4,5-tetrahydrodipicolinate + acetyl-CoA + H2O = L-2-acetamido-6-oxoheptanedioate + CoA. It functions in the pathway amino-acid biosynthesis; L-lysine biosynthesis via DAP pathway; LL-2,6-diaminopimelate from (S)-tetrahydrodipicolinate (acetylase route): step 1/3. Functionally, catalyzes the transfer of an acetyl group from acetyl-CoA to tetrahydrodipicolinate. In Geobacillus kaustophilus (strain HTA426), this protein is 2,3,4,5-tetrahydropyridine-2,6-dicarboxylate N-acetyltransferase.